We begin with the raw amino-acid sequence, 1377 residues long: Temperature-sensitive hemagglutinin tsh autotransporter (1377 aa).

Residues methionine 1–alanine 52 form the signal peptide. Positions glycine 53–glutamine 302 constitute a Peptidase S6 domain. Active-site charge relay system residues include histidine 125, aspartate 153, and serine 259. The 267-residue stretch at aspartate 1111–phenylalanine 1377 folds into the Autotransporter domain.

The C-terminus is blocked. In terms of processing, cleaved to release the mature protein from the outer membrane.

It localises to the periplasm. The protein resides in the secreted. Its subcellular location is the cell surface. It is found in the cell outer membrane. Functionally, contributes to the development of lesions and deposition of fibrin in the avian air sacs. It can act both as an adhesin and as a serine protease. Agglutinates erythrocytes while in contact with the extracellular surface of the bacterial cells. Can adhere to purified hemoglobin and bind with great efficiency to extracellular matrix proteins. Cleaves casein and exhibits mucinolytic activity. This chain is Temperature-sensitive hemagglutinin tsh autotransporter (tsh), found in Escherichia coli.